Here is a 125-residue protein sequence, read N- to C-terminus: Prepro-urotensin II-gamma (125 aa).

The first 21 residues, 1–21 (MMCNLLLSCSVLLLSCSHLLA), serve as a signal peptide directing secretion. Residues 109-111 (QFR) constitute a propeptide that is removed on maturation. C119 and C124 are oxidised to a cystine.

It belongs to the urotensin-2 family.

Its subcellular location is the secreted. Urotensin is found in the teleost caudal neurosecretory system. It has a suggested role in osmoregulation and as a corticotropin-releasing factor. The non-hormonal portion of this precursor may be a urotensin binding protein, urophysin. This is Prepro-urotensin II-gamma from Cyprinus carpio (Common carp).